The primary structure comprises 63 residues: Large ribosomal subunit protein bL28 (63 aa).

It belongs to the bacterial ribosomal protein bL28 family.

In Acidobacterium capsulatum (strain ATCC 51196 / DSM 11244 / BCRC 80197 / JCM 7670 / NBRC 15755 / NCIMB 13165 / 161), this protein is Large ribosomal subunit protein bL28.